The chain runs to 296 residues: F-box only protein 2 (296 aa).

The disordered stretch occupies residues 1 to 41; it reads MDGDGDPESVGQPEEASPEEQPEEASAEEERPEDQQEEEAA. Positions 16–40 are enriched in acidic residues; sequence ASPEEQPEEASAEEERPEDQQEEEA. Residues 44–91 enclose the F-box domain; sequence AAYLDELPEPLLLRVLAALPAAELVQACRLVCLRWKELVDGAPLWLLK. Positions 113–296 constitute an FBA domain; the sequence is FYFLSKRRRN…VTNSSVWVEP (184 aa). Residues 210-212 and 278-279 contribute to the a carbohydrate site; these read RSD and YW.

In terms of assembly, component of the SCF(FBXO2) complex consisting of CUL1, RBX1, SKP1 and FBXO2. Predominantly detected as heterodimer with SKP1; the heterodimer with SKP1 is not part of the SCF(FBXO2) complex.

Its subcellular location is the cytoplasm. The protein localises to the microsome membrane. Its pathway is protein modification; protein ubiquitination. Substrate recognition component of a SCF (SKP1-CUL1-F-box protein) E3 ubiquitin-protein ligase complex that mediates the ubiquitination and subsequent proteasomal degradation of target proteins. Involved in the endoplasmic reticulum-associated degradation pathway (ERAD) for misfolded lumenal proteins by recognizing and binding sugar chains on unfolded glycoproteins that are retrotranslocated into the cytosol and promoting their ubiquitination and subsequent degradation. Prevents formation of cytosolic aggregates of unfolded glycoproteins that have been retrotranslocated into the cytosol. Able to recognize and bind denatured glycoproteins, preferentially those of the high-mannose type. The chain is F-box only protein 2 (FBXO2) from Homo sapiens (Human).